Reading from the N-terminus, the 118-residue chain is UPF0102 protein Lxx14785 (118 aa).

Belongs to the UPF0102 family.

The protein is UPF0102 protein Lxx14785 of Leifsonia xyli subsp. xyli (strain CTCB07).